The primary structure comprises 695 residues: MARQVSLKDTRNIGIMAHIDAGKTTVTERILYYSGKIHKIGDTHDGAAQMDWMVQEQERGITITSAATTCFWKGNRINIIDTPGHVDFTVEVERSLRVLDGSVALFDAKSGVEPQSETVWRQADKYGVPRICFINKMDATGADYFMSVDTIRERLRANAVPIEIPIGAEDKFVGVVDLITMKANIYKNELGTEFTVEEIPSDLVEVAEKYRAELLENIAEHDEELMEKYLEGEELTEEEIKRAIRTATIANAMNPVLCGSAYKNKGVQPLLDAIVDYMPAPIDVPDIKGVDPQTDEPTTRKSSDEEPFAALAFKIATDPYVGKLAFTRVYSGTVESGSYVYNSTKGKRERIGRILMMHANKREEIDKAYAGDIVAIIGLKDTTTGDTLCDMDSEVILENMEFPDPVISVAIEPKTKASQEKMGIALAKLAEEDPTFRTYTDEETGDTIISGMGELHLEIIVDRLLREFKVEANIGNPQVAYRESITQAAEAQGKYVKQSGGRGQYGDCTLRVEPLDNPEESNGIEFVNAIVGGAIPKEYIPSVQAGAEEAAQTGILGGYPMLDMKITLLDGSYHDVDSSEMAYKIAGSMGFRAAVAKAKPILLEPAMKVEITTPDEYLGDVMGDVSSRRGKIDGMNPKNGVHVLDAFIPLAEMFGYATDLRSKTQGRATYSMQFDHYEQVPNSISEEVIGKKNNK.

Residues 8–282 (KDTRNIGIMA…AIVDYMPAPI (275 aa)) enclose the tr-type G domain. Residues 17-24 (AHIDAGKT), 81-85 (DTPGH), and 135-138 (NKMD) contribute to the GTP site. The disordered stretch occupies residues 285 to 304 (PDIKGVDPQTDEPTTRKSSD).

This sequence belongs to the TRAFAC class translation factor GTPase superfamily. Classic translation factor GTPase family. EF-G/EF-2 subfamily.

It localises to the cytoplasm. In terms of biological role, catalyzes the GTP-dependent ribosomal translocation step during translation elongation. During this step, the ribosome changes from the pre-translocational (PRE) to the post-translocational (POST) state as the newly formed A-site-bound peptidyl-tRNA and P-site-bound deacylated tRNA move to the P and E sites, respectively. Catalyzes the coordinated movement of the two tRNA molecules, the mRNA and conformational changes in the ribosome. The polypeptide is Elongation factor G (Finegoldia magna (strain ATCC 29328 / DSM 20472 / WAL 2508) (Peptostreptococcus magnus)).